Reading from the N-terminus, the 835-residue chain is MIGILKKVFDVNQRQIKRMQKTVEQIDALESSIKPLTDEQLKGKTLEFKERLTKGETVDDLLPEAFAVVREAATRVLGMRPYGVQLMGGIALHEGNISEMKTGEGKTLTSTLPVYLNALTGKGVHVVTVNEYLAQRDASEMGQLHEFLGLTVGINLNSMSREEKQEAYAADITYSTNNELGFDYLRDNMVLYKEQCVQRPLHFAIIDEVDSILVDEARTPLIISGQAQKSTELYMFANAFVRTLENEKDYSFDVKTKNVMLTEDGITKAEKAFHIENLFDLKHVALLHHINQGLRAHVVMHRDTDYVVQEGEIVIVDQFTGRLMKGRRYSEGLHQAIEAKEGVEIQNESMTLATITFQNYFRMYEKLSGMTGTAKTEEEEFRNIYNMNVIVIPTNKPIIRDDRADLIFKSMEGKFNAVVEDIVNRHKKGQPVLVGTVAIETSELISKMLTRKGVRHNILNAKNHAREADIIAEAGIKGAVTIATNMAGRGTDIKLGDDVKNVGLAVIGTERHESRRIDNQLRGRAGRQGDPGVTQFYLSMEDELMRRFGSDNMKAMMDRLGMDDSQPIESKMVSRAVESAQKRVEGNNYDARKQLLQYDDVLRQQREVIYKQRQEVMESDNLRGIIEGMMKSTVERAVALHTQEEIEEDWNIKGLVDYLNTNLLQDGDVKEEELRRLAPEEMSEPIIAKLIERYNEKEKLMPEEQMREFEKVVVFRVVDTKWTEHIDAMDHLREGIHLRAYGQIDPLREYQMEGFAMFESMVASIEEEISRYIMKAEIEQNLERQEVVQGEAVHPSSDGEEAKKKPVVKGDQVGRNDLCKCGSGKKYKNCCGIVQ.

ATP-binding positions include glutamine 85, 103 to 107 (GEGKT), and aspartate 492. Residues 788-807 (VQGEAVHPSSDGEEAKKKPV) form a disordered region. Cysteine 819, cysteine 821, cysteine 830, and cysteine 831 together coordinate Zn(2+).

It belongs to the SecA family. In terms of assembly, monomer and homodimer. Part of the essential Sec protein translocation apparatus which comprises SecA, SecYEG and auxiliary proteins SecDF. Other proteins may also be involved. The cofactor is Zn(2+).

It localises to the cell membrane. It is found in the cytoplasm. The enzyme catalyses ATP + H2O + cellular proteinSide 1 = ADP + phosphate + cellular proteinSide 2.. Part of the Sec protein translocase complex. Interacts with the SecYEG preprotein conducting channel. Has a central role in coupling the hydrolysis of ATP to the transfer of proteins into and across the cell membrane, serving as an ATP-driven molecular motor driving the stepwise translocation of polypeptide chains across the membrane. The protein is Protein translocase subunit SecA of Bacillus cereus (strain B4264).